We begin with the raw amino-acid sequence, 293 residues long: Neugrin (293 aa).

The signal sequence occupies residues 1-15 (MALSLSLFLGGRVRA). Disordered regions lie at residues 25-48 (QGVA…PEER) and 162-211 (PLSA…EKNK). Ser41 carries the phosphoserine modification. The N-linked (GlcNAc...) asparagine glycan is linked to Asn270.

Belongs to the neugrin family. As to quaternary structure, forms a regulatory protein-RNA complex, consisting of RCC1L, NGRN, RPUSD3, RPUSD4, TRUB2, FASTKD2 and 16S mt-rRNA. Interacts with 16S mt-rRNA; this interaction is direct.

It localises to the nucleus. The protein localises to the secreted. The protein resides in the mitochondrion membrane. In terms of biological role, plays an essential role in mitochondrial ribosome biogenesis. As a component of a functional protein-RNA module, consisting of RCC1L, NGRN, RPUSD3, RPUSD4, TRUB2, FASTKD2 and 16S mitochondrial ribosomal RNA (16S mt-rRNA), controls 16S mt-rRNA abundance and is required for intra-mitochondrial translation of core subunits of the oxidative phosphorylation system. The polypeptide is Neugrin (Ngrn) (Rattus norvegicus (Rat)).